A 151-amino-acid polypeptide reads, in one-letter code: Protein A151R (151 aa).

Residues H102, C109, C132, and C135 each coordinate Zn(2+). The short motif at 131 to 135 (WCTKC) is the Thioredoxin WCTKC motif element.

It belongs to the asfivirus A151R family. Monomer. Homodimer. Interacts with protein B119L. Interacts with membrane protein E248R. Zn(2+) is required as a cofactor.

Functionally, may participate in a redox cascade for the formation of disulfide bonds in viral proteins. The polypeptide is Protein A151R (African swine fever virus (strain Badajoz 1971 Vero-adapted) (Ba71V)).